Reading from the N-terminus, the 465-residue chain is Hexokinase-4 (465 aa).

A Hexokinase domain is found at 10 to 454; sequence ATKKEKVEQI…SGRGAALVSA (445 aa). The segment at 67-203 is hexokinase small subdomain; the sequence is EGSEVGDFLS…DFEMDVVAMV (137 aa). 78-83 is a binding site for ATP; sequence DLGGTN. Substrate-binding positions include 151–152, 168–169, and 204–205; these read SF, TK, and ND. The tract at residues 204-443 is hexokinase large subdomain; sequence NDTVATMISC…CEITFIESEE (240 aa). ATP is bound at residue threonine 228. 3 residues coordinate substrate: asparagine 231, glutamate 256, and glutamate 290. ATP is bound by residues 295 to 296, 332 to 336, and 411 to 415; these read GK, TRFVS, and SVYKL.

It belongs to the hexokinase family. Monomer. Interacts with MIDN; the interaction occurs preferentially at low glucose levels and results in inhibition of hexokinase activity. Interacts with GCKR; leading to sequestration in the nucleus.

The protein resides in the cytoplasm. Its subcellular location is the nucleus. It localises to the mitochondrion. It catalyses the reaction a D-hexose + ATP = a D-hexose 6-phosphate + ADP + H(+). The catalysed reaction is D-fructose + ATP = D-fructose 6-phosphate + ADP + H(+). The enzyme catalyses D-glucose + ATP = D-glucose 6-phosphate + ADP + H(+). It carries out the reaction D-mannose + ATP = D-mannose 6-phosphate + ADP + H(+). The protein operates within carbohydrate metabolism; hexose metabolism. It functions in the pathway carbohydrate degradation; glycolysis; D-glyceraldehyde 3-phosphate and glycerone phosphate from D-glucose: step 1/4. Its activity is regulated as follows. Subject to allosteric regulation. Low glucose and high fructose-6-phosphate triggers association with the inhibitor GCKR followed by sequestration in the nucleus. Functionally, catalyzes the phosphorylation of hexose, such as D-glucose, D-fructose and D-mannose, to hexose 6-phosphate (D-glucose 6-phosphate, D-fructose 6-phosphate and D-mannose 6-phosphate, respectively). Compared to other hexokinases, has a weak affinity for D-glucose, and is effective only when glucose is abundant. Mainly expressed in pancreatic beta cells and the liver and constitutes a rate-limiting step in glucose metabolism in these tissues. Since insulin secretion parallels glucose metabolism and the low glucose affinity of GCK ensures that it can change its enzymatic activity within the physiological range of glucose concentrations, GCK acts as a glucose sensor in the pancreatic beta cell. In pancreas, plays an important role in modulating insulin secretion. In liver, helps to facilitate the uptake and conversion of glucose by acting as an insulin-sensitive determinant of hepatic glucose usage. Required to provide D-glucose 6-phosphate for the synthesis of glycogen. Mediates the initial step of glycolysis by catalyzing phosphorylation of D-glucose to D-glucose 6-phosphate. The sequence is that of Hexokinase-4 from Mus musculus (Mouse).